The following is a 349-amino-acid chain: Ribosome production factor 1 (349 aa).

Disordered regions lie at residues 1-58 (MAKA…SEIK) and 71-105 (KQQQ…PKTI). Residues 87–97 (KEREALGDKAP) show a composition bias toward basic and acidic residues. The Brix domain maps to 142–325 (PKILITTSDR…LRSLQKGTFD (184 aa)). The RNA-binding stretch occupies residues 303–320 (VGIQELGPRFTLKLRSLQ).

The protein localises to the nucleus. It is found in the nucleolus. Functionally, may be required for ribosome biogenesis. The protein is Ribosome production factor 1 (Rpf1) of Mus musculus (Mouse).